The following is an 89-amino-acid chain: DNA-directed RNA polymerase subunit Rpo6 (89 aa).

Belongs to the archaeal Rpo6/eukaryotic RPB6 RNA polymerase subunit family. Part of the RNA polymerase complex.

It is found in the cytoplasm. The catalysed reaction is RNA(n) + a ribonucleoside 5'-triphosphate = RNA(n+1) + diphosphate. In terms of biological role, DNA-dependent RNA polymerase (RNAP) catalyzes the transcription of DNA into RNA using the four ribonucleoside triphosphates as substrates. In Aeropyrum pernix (strain ATCC 700893 / DSM 11879 / JCM 9820 / NBRC 100138 / K1), this protein is DNA-directed RNA polymerase subunit Rpo6.